The following is a 95-amino-acid chain: Small ribosomal subunit protein bS6 (95 aa).

It belongs to the bacterial ribosomal protein bS6 family.

Functionally, binds together with bS18 to 16S ribosomal RNA. This Corynebacterium urealyticum (strain ATCC 43042 / DSM 7109) protein is Small ribosomal subunit protein bS6.